The primary structure comprises 187 residues: RNA pyrophosphohydrolase (187 aa).

In terms of domain architecture, Nudix hydrolase spans 6 to 149; sequence GYRANVGIIL…KRQVYRQALT (144 aa). Positions 38 to 59 match the Nudix box motif; it reads GGIKSGETPTEAMYRELAEETG. Residues 166 to 187 form a disordered region; sequence AYREPLEPVEKNRKKSSDTRQS.

It belongs to the Nudix hydrolase family. RppH subfamily. A divalent metal cation is required as a cofactor.

Its function is as follows. Accelerates the degradation of transcripts by removing pyrophosphate from the 5'-end of triphosphorylated RNA, leading to a more labile monophosphorylated state that can stimulate subsequent ribonuclease cleavage. In Nitrosomonas europaea (strain ATCC 19718 / CIP 103999 / KCTC 2705 / NBRC 14298), this protein is RNA pyrophosphohydrolase.